The chain runs to 84 residues: Esculentin-1ISb (84 aa).

An N-terminal signal peptide occupies residues 1–22; sequence MFTLKKPLLLIVLLGIISLSLC. A propeptide spans 23–36 (removed in mature form); that stretch reads EQERAADEDEGTKI. A disulfide bridge connects residues Cys78 and Cys84.

Expressed by the skin glands.

The protein resides in the secreted. Its function is as follows. Has antimicrobial activity against Gram-negative bacterium E.coli ATCC 8739 (MIC=3.1 ug), against Gram positive bacteria S.aureus ATCC 6538 (MIC=3.1 ug), methicillin-resistant S.aureus ATCC 43300 (MIC=12.5 ug), B.subtilis ATCC 6633 (MIC=12.5 ug) and against fungus C.albicans ATCC 90028 (MIC=50 ug). The chain is Esculentin-1ISb from Odorrana ishikawae (Ishikawa's frog).